The sequence spans 497 residues: Transcription termination/antitermination protein NusA (497 aa).

The region spanning 135 to 200 (GKILTGIVKK…RGAQLFVTRS (66 aa)) is the S1 motif domain. The 71-residue stretch at 302–372 (RHTIDIAVDS…LKIDQKISNI (71 aa)) folds into the KH domain. A run of 2 repeats spans residues 364–414 (KIDQ…KKAL) and 439–489 (GMNQ…RNIC). Residues 364 to 489 (KIDQKISNIL…MLIMAARNIC (126 aa)) are 2 X 51 AA approximate repeats.

The protein belongs to the NusA family. In terms of assembly, monomer. Binds directly to the core enzyme of the DNA-dependent RNA polymerase and to nascent RNA.

It localises to the cytoplasm. Its function is as follows. Participates in both transcription termination and antitermination. This Buchnera aphidicola subsp. Baizongia pistaciae (strain Bp) protein is Transcription termination/antitermination protein NusA.